A 96-amino-acid polypeptide reads, in one-letter code: Cytochrome c oxidase assembly factor 3 homolog, mitochondrial (96 aa).

Residues 1–50 (MSSQGEPKPEAQFAKRIDPTKEALTKEQLQFIRQVEMAQWKKKTDKLRGR) are Mitochondrial matrix-facing. A helical transmembrane segment spans residues 51 to 73 (NVATGLAIGAVVLGIYGYTFYSV). Residues 74-96 (SQEKIMDEIDEEAKVRVPKTGAN) are Mitochondrial intermembrane-facing.

It belongs to the COA3 family. Core component of the MITRAC (mitochondrial translation regulation assembly intermediate of cytochrome c oxidase complex) complex.

The protein resides in the mitochondrion inner membrane. Functionally, core component of the MITRAC (mitochondrial translation regulation assembly intermediate of cytochrome c oxidase complex) complex, that regulates cytochrome c oxidase assembly. MITRAC complexes regulate both translation of mitochondrial encoded components and assembly of nuclear-encoded components imported in mitochondrion. Required for efficient translation of MT-CO1 and mitochondrial respiratory chain complex IV assembly. The chain is Cytochrome c oxidase assembly factor 3 homolog, mitochondrial (coa3a) from Danio rerio (Zebrafish).